The primary structure comprises 558 residues: Membrane protein insertase YidC (558 aa).

The next 6 helical transmembrane spans lie at 5–25 (IINL…WQYF), 332–352 (AIDF…MNFF), 355–375 (YVGN…LLMF), 429–449 (LPIL…YVTI), 474–494 (LFGL…WPIL), and 520–540 (FMPL…LIYW).

It belongs to the OXA1/ALB3/YidC family. Type 1 subfamily. As to quaternary structure, interacts with the Sec translocase complex via SecD. Specifically interacts with transmembrane segments of nascent integral membrane proteins during membrane integration.

The protein localises to the cell inner membrane. In terms of biological role, required for the insertion and/or proper folding and/or complex formation of integral membrane proteins into the membrane. Involved in integration of membrane proteins that insert both dependently and independently of the Sec translocase complex, as well as at least some lipoproteins. Aids folding of multispanning membrane proteins. This is Membrane protein insertase YidC from Rickettsia typhi (strain ATCC VR-144 / Wilmington).